The chain runs to 348 residues: Dual-specificity RNA methyltransferase RlmN (348 aa).

The Proton acceptor role is filled by glutamate 94. One can recognise a Radical SAM core domain in the interval 100 to 330 (GKHNWTACIS…TAIIRASRGR (231 aa)). Cysteines 107 and 336 form a disulfide. Residues cysteine 114, cysteine 118, and cysteine 121 each coordinate [4Fe-4S] cluster. Residues 163 to 164 (GE), serine 195, 217 to 219 (SLN), and asparagine 293 each bind S-adenosyl-L-methionine. Cysteine 336 functions as the S-methylcysteine intermediate in the catalytic mechanism.

The protein belongs to the radical SAM superfamily. RlmN family. The cofactor is [4Fe-4S] cluster.

It localises to the cytoplasm. It catalyses the reaction adenosine(2503) in 23S rRNA + 2 reduced [2Fe-2S]-[ferredoxin] + 2 S-adenosyl-L-methionine = 2-methyladenosine(2503) in 23S rRNA + 5'-deoxyadenosine + L-methionine + 2 oxidized [2Fe-2S]-[ferredoxin] + S-adenosyl-L-homocysteine. The enzyme catalyses adenosine(37) in tRNA + 2 reduced [2Fe-2S]-[ferredoxin] + 2 S-adenosyl-L-methionine = 2-methyladenosine(37) in tRNA + 5'-deoxyadenosine + L-methionine + 2 oxidized [2Fe-2S]-[ferredoxin] + S-adenosyl-L-homocysteine. Functionally, specifically methylates position 2 of adenine 2503 in 23S rRNA and position 2 of adenine 37 in tRNAs. m2A2503 modification seems to play a crucial role in the proofreading step occurring at the peptidyl transferase center and thus would serve to optimize ribosomal fidelity. In Syntrophus aciditrophicus (strain SB), this protein is Dual-specificity RNA methyltransferase RlmN.